A 252-amino-acid polypeptide reads, in one-letter code: Proteasome subunit alpha 1 (252 aa).

Residue Met1 is modified to N-acetylmethionine; alternate.

It belongs to the peptidase T1A family. As to quaternary structure, the 20S proteasome core is composed of 14 alpha and 14 beta subunits that assemble into four stacked heptameric rings, resulting in a barrel-shaped structure. The two inner rings, each composed of seven catalytic beta subunits, are sandwiched by two outer rings, each composed of seven alpha subunits. H.volcanii produces at least 2 types of 20S proteasomes: an alpha1-beta proteasome and a proteasome containing all three subunits (alpha1, alpha2, and beta) that appears to be asymmetrical with homo-oligomeric alpha1 and alpha2 rings positioned on separate ends. The catalytic chamber with the active sites is on the inside of the barrel. Has probably a gated structure, the ends of the cylinder being occluded by the N-termini of the alpha-subunits. Is likely capped at one or both ends by the proteasome regulatory ATPase, PAN. Acetylated. The acetylated form at Met-1 was shown to be in 100-fold excess of the unacetylated form with the initiator methionine removed in whole cells and purified 20S proteasomes.

The protein resides in the cytoplasm. With respect to regulation, the formation of the proteasomal ATPase PAN-20S proteasome complex, via the docking of the C-termini of PAN into the intersubunit pockets in the alpha-rings, triggers opening of the gate for substrate entry. Interconversion between the open-gate and close-gate conformations leads to a dynamic regulation of the 20S proteasome proteolysis activity. In vitro, the chymotrypsin-like activity of the alpha1-beta proteasome is potently inhibited by carbobenzoxyl-leucinyl-leucinyl-leucinal-H (MG132) and significantly by N-acetyl-leucinyl-leucinyl-norleucinal-H (calpain inhibitor I). Its function is as follows. Component of the proteasome core, a large protease complex with broad specificity involved in protein degradation. The H.volcanii alpha1-beta proteasome is able to cleave oligopeptides after Phe, Tyr and Trp, poorly after Glu but not after Arg. Thus, displays chymotrypsin-like activity, low caspase-like activity but no trypsin-like activity. This is Proteasome subunit alpha 1 from Haloferax volcanii (strain ATCC 29605 / DSM 3757 / JCM 8879 / NBRC 14742 / NCIMB 2012 / VKM B-1768 / DS2) (Halobacterium volcanii).